The chain runs to 150 residues: Flagellar assembly factor FliW (150 aa).

Belongs to the FliW family. In terms of assembly, interacts with translational regulator CsrA. Interacts with flagellins FlaB1, FlaB2 and FlaB3.

Its subcellular location is the cytoplasm. Its function is as follows. Acts as an anti-CsrA protein, binds CsrA and prevents it from repressing translation of its target genes, one of which is flagellin. Binds to flagellin and participates in the assembly of the flagellum. In terms of biological role, binds to the C-terminal region of flagellin, which is implicated in polymerization, and participates in the assembly of the flagellum. This Treponema pallidum (strain Nichols) protein is Flagellar assembly factor FliW.